We begin with the raw amino-acid sequence, 332 residues long: Ferredoxin--NADP reductase (332 aa).

D33, Q41, Y46, A86, F120, D286, and T327 together coordinate FAD.

It belongs to the ferredoxin--NADP reductase type 2 family. In terms of assembly, homodimer. Requires FAD as cofactor.

It carries out the reaction 2 reduced [2Fe-2S]-[ferredoxin] + NADP(+) + H(+) = 2 oxidized [2Fe-2S]-[ferredoxin] + NADPH. The protein is Ferredoxin--NADP reductase of Rickettsia bellii (strain OSU 85-389).